The sequence spans 181 residues: ATP-dependent protease subunit HslV (181 aa).

Residue Thr7 is part of the active site. Gly166, Cys169, and Thr172 together coordinate Na(+).

This sequence belongs to the peptidase T1B family. HslV subfamily. In terms of assembly, a double ring-shaped homohexamer of HslV is capped on each side by a ring-shaped HslU homohexamer. The assembly of the HslU/HslV complex is dependent on binding of ATP.

Its subcellular location is the cytoplasm. It carries out the reaction ATP-dependent cleavage of peptide bonds with broad specificity.. Allosterically activated by HslU binding. In terms of biological role, protease subunit of a proteasome-like degradation complex believed to be a general protein degrading machinery. This Delftia acidovorans (strain DSM 14801 / SPH-1) protein is ATP-dependent protease subunit HslV.